A 423-amino-acid chain; its full sequence is MLFERAKSVFPGGVNSPARALKHLPSPLVAKAASGAYLYTDRGKLVDYCMAFGAIILGHAHPRVKKAVEEQLEKGWIYALLTEQEVEFAERIRRHMPSVEKMRIVNTGTEATMSAIRAARGYTKRDVIIKFEGNFHGSHDYVLVKAGSGAATWGIPTSAGIPQEVARLTVVVPYNDIDAFIKAVREVGDRLAAVIVEPVAGNYGLIIPDVEFLKALREETQRAGALLIFDEVITGFRVGLGGAQGLFGIRPDLTTLGKVVGGGFPIGIFGGRGEVMDLVAPSGPVYNAGTYNAHPVSIAAGLAVLKELETGEPYRIANEAAERLAKGVEDVAGRLGFDVVVKRMASMFQFYFKKGDVKTPQDVRESNEKMYLKLHEIALKHGVYLTPSQYEVNFTSAAHGREVVEETLAALEKSFQELQREIG.

Residue Lys258 is modified to N6-(pyridoxal phosphate)lysine.

The protein belongs to the class-III pyridoxal-phosphate-dependent aminotransferase family. HemL subfamily. It depends on pyridoxal 5'-phosphate as a cofactor.

It is found in the cytoplasm. The catalysed reaction is (S)-4-amino-5-oxopentanoate = 5-aminolevulinate. Its pathway is porphyrin-containing compound metabolism; protoporphyrin-IX biosynthesis; 5-aminolevulinate from L-glutamyl-tRNA(Glu): step 2/2. The polypeptide is Glutamate-1-semialdehyde 2,1-aminomutase (Pyrobaculum aerophilum (strain ATCC 51768 / DSM 7523 / JCM 9630 / CIP 104966 / NBRC 100827 / IM2)).